The sequence spans 57 residues: DNA-directed RNA polymerase subunit Rpo6 (57 aa).

This sequence belongs to the archaeal Rpo6/eukaryotic RPB6 RNA polymerase subunit family. As to quaternary structure, part of the RNA polymerase complex.

Its subcellular location is the cytoplasm. The protein resides in the chromosome. It catalyses the reaction RNA(n) + a ribonucleoside 5'-triphosphate = RNA(n+1) + diphosphate. Functionally, DNA-dependent RNA polymerase (RNAP) catalyzes the transcription of DNA into RNA using the four ribonucleoside triphosphates as substrates. The protein is DNA-directed RNA polymerase subunit Rpo6 of Thermococcus kodakarensis (strain ATCC BAA-918 / JCM 12380 / KOD1) (Pyrococcus kodakaraensis (strain KOD1)).